The sequence spans 177 residues: Protein BROTHER of FT and TFL 1 (177 aa).

It belongs to the phosphatidylethanolamine-binding protein family.

The protein resides in the cytoplasm. May form complexes with phosphorylated ligands by interfering with kinases and their effectors. This Arabidopsis thaliana (Mouse-ear cress) protein is Protein BROTHER of FT and TFL 1 (BFT).